Reading from the N-terminus, the 62-residue chain is uncharacterized protein (62 aa).

2 helical membrane-spanning segments follow: residues 7–27 and 34–51; these read LLLLFAFAAVFSIMLIGVFIA and IIASIVLVCAVMGGGFTL.

It localises to the cell membrane. This is an uncharacterized protein from Bacillus subtilis (strain 168).